The following is a 460-amino-acid chain: Cyclin-A1-1 (460 aa).

2 disordered regions span residues 1 to 52 and 95 to 126; these read MSNI…ITNQ and PHKV…KSPQ. Composition is skewed to low complexity over residues 10–19 and 100–111; these read SSFSSSTKSS and SSPSKSDDGSVS.

The protein belongs to the cyclin family. Cyclin AB subfamily. In terms of assembly, interacts with FZR2/CCS52A1, FZR1/CCS52A2 and FZR3/CCS52B.

This chain is Cyclin-A1-1 (CYCA1-1), found in Arabidopsis thaliana (Mouse-ear cress).